Reading from the N-terminus, the 147-residue chain is uncharacterized protein (147 aa).

A helical transmembrane segment spans residues 13–35 (NSRINLLGILVLNVVCGKSSIFF).

The protein localises to the membrane. This is an uncharacterized protein from Saccharomyces cerevisiae (strain ATCC 204508 / S288c) (Baker's yeast).